Reading from the N-terminus, the 229-residue chain is MESTRMTRTLAAMQLMDSALPTGAFSHSHGFETYLHRGVIHDASSFGVWLQMFIQQQLTFTDAVVIREVFRSTSLKRVGELDQLITAQAVPEQIRTAGKTMGIRMLEIAEQGYPDPALIWYRREVDQRTLSGHPAIVWALVARALDVAEDEAVAQHLYATSMSLIHNAVRAVPFGQNAGQHLIRQAQEWVTAAVGNSADIEFDDIGSITPGLEIAQMQHENQRARMFMS.

This sequence belongs to the UreF family. UreD, UreF and UreG form a complex that acts as a GTP-hydrolysis-dependent molecular chaperone, activating the urease apoprotein by helping to assemble the nickel containing metallocenter of UreC. The UreE protein probably delivers the nickel.

The protein resides in the cytoplasm. Functionally, required for maturation of urease via the functional incorporation of the urease nickel metallocenter. The protein is Urease accessory protein UreF of Corynebacterium efficiens (strain DSM 44549 / YS-314 / AJ 12310 / JCM 11189 / NBRC 100395).